The following is a 239-amino-acid chain: UPF0173 metal-dependent hydrolase Dvul_0081 (239 aa).

The protein belongs to the UPF0173 family.

This is UPF0173 metal-dependent hydrolase Dvul_0081 from Nitratidesulfovibrio vulgaris (strain DP4) (Desulfovibrio vulgaris).